The following is a 308-amino-acid chain: GMP synthase [glutamine-hydrolyzing] subunit B (308 aa).

The GMPS ATP-PPase domain maps to 1–185; the sequence is MNWEKFVEEK…LGLPEKIYNR (185 aa). 28-34 is a binding site for ATP; it reads SGGVDSS.

In terms of assembly, heterodimer composed of a glutamine amidotransferase subunit (A) and a GMP-binding subunit (B).

It catalyses the reaction XMP + L-glutamine + ATP + H2O = GMP + L-glutamate + AMP + diphosphate + 2 H(+). It functions in the pathway purine metabolism; GMP biosynthesis; GMP from XMP (L-Gln route): step 1/1. Functionally, catalyzes the synthesis of GMP from XMP. This is GMP synthase [glutamine-hydrolyzing] subunit B (guaAB) from Pyrococcus abyssi (strain GE5 / Orsay).